A 176-amino-acid polypeptide reads, in one-letter code: Variant surface antigen A (176 aa).

A signal peptide spans 1 to 29 (MKKSIFSKKLLVSFGSLVALAAIPLIAIS). Cys-30 carries N-palmitoyl cysteine lipidation. Residue Cys-30 is the site of S-diacylglycerol cysteine attachment. Residues 33-176 (TDNNSSQSQQ…TKTENTQHTS (144 aa)) are disordered. The span at 35 to 121 (NNSSQSQQPG…GSNSESGMNS (87 aa)) shows a compositional bias: low complexity. Repeat 1 spans residues 123 to 135 (KTENTQQSEAPGT). Positions 123 to 176 (KTENTQQSEAPGTNTGNKTTSESNSESGMNSEKTENTQQSEAPGTKTENTQHTS) are 2.5 X 13 AA repeats. A compositionally biased stretch (polar residues) spans 126–142 (NTQQSEAPGTNTGNKTT). Over residues 143–153 (SESNSESGMNS) the composition is skewed to low complexity. Residues 155–167 (KTENTQQSEAPGT) form repeat 2. Positions 158 to 176 (NTQQSEAPGTKTENTQHTS) are enriched in polar residues. A 3; truncated repeat occupies 168–176 (KTENTQHTS).

It localises to the cell membrane. Responsible for the antigenic diversity for host adaptation. This Mesomycoplasma hyorhinis (Mycoplasma hyorhinis) protein is Variant surface antigen A (vlpA).